We begin with the raw amino-acid sequence, 727 residues long: DNA replication licensing factor MCM5 (727 aa).

The 207-residue stretch at Val325–Ile531 folds into the MCM domain. Position 375 to 382 (Gly375 to Ser382) interacts with ATP. Positions Ser507–Asp510 match the Arginine finger motif.

Belongs to the MCM family. Component of the minichromosome maintenance (MCM) complex, a heterotetramer composed of MCM2, MCM3, MCM4, MCM5, MCM6 and MCM7. Interacts with EGT1. In terms of tissue distribution, expressed in shoot apex and flower buds.

The protein resides in the nucleus. The protein localises to the cytoplasm. It carries out the reaction ATP + H2O = ADP + phosphate + H(+). Its function is as follows. Probable component of the MCM2-7 complex (MCM complex) that may function as a DNA helicase and which is essential to undergo a single round of replication initiation and elongation per cell cycle in eukaryotic cells. The protein is DNA replication licensing factor MCM5 (MCM5) of Arabidopsis thaliana (Mouse-ear cress).